We begin with the raw amino-acid sequence, 504 residues long: Hexokinase-10 (504 aa).

The helical transmembrane segment at 7-29 (GWVRVAAVGWAVAACAVAAGMVA) threads the bilayer. The region spanning 39-493 (NRAVAVVRDL…SGTGAALLAA (455 aa)) is the Hexokinase domain. The hexokinase small subdomain stretch occupies residues 94 to 226 (DGSEEGISYA…GLNMKVNVLV (133 aa)). ADP-binding residues include Gly-108 and Thr-109. Residues Thr-192, Lys-193, Asn-227, Asn-254, Glu-282, and Glu-313 each contribute to the D-glucose site. The interval 227-482 (NNTVGTLALG…ATVSLRVMEE (256 aa)) is hexokinase large subdomain. Gly-447 lines the ADP pocket.

Belongs to the hexokinase family. As to expression, expressed specifically in stamen.

The protein resides in the plastid. Its subcellular location is the chloroplast outer membrane. The catalysed reaction is a D-hexose + ATP = a D-hexose 6-phosphate + ADP + H(+). The enzyme catalyses D-fructose + ATP = D-fructose 6-phosphate + ADP + H(+). It catalyses the reaction D-glucose + ATP = D-glucose 6-phosphate + ADP + H(+). It participates in carbohydrate metabolism; hexose metabolism. The protein operates within carbohydrate degradation; glycolysis; D-glyceraldehyde 3-phosphate and glycerone phosphate from D-glucose: step 1/4. Its function is as follows. Fructose and glucose phosphorylating enzyme. In Oryza sativa subsp. japonica (Rice), this protein is Hexokinase-10 (HXK10).